Consider the following 131-residue polypeptide: Sec-independent protein translocase protein TatB (131 aa).

A helical membrane pass occupies residues 2–22 (FDGIGFMELLLIGVLGLVVLG). The disordered stretch occupies residues 69–131 (NQGLKNLAPE…ENAKSDKPNG (63 aa)). A compositionally biased stretch (low complexity) spans 105–123 (AKETPAKETATTETTSTEN).

Belongs to the TatB family. The Tat system comprises two distinct complexes: a TatABC complex, containing multiple copies of TatA, TatB and TatC subunits, and a separate TatA complex, containing only TatA subunits. Substrates initially bind to the TatABC complex, which probably triggers association of the separate TatA complex to form the active translocon.

Its subcellular location is the cell inner membrane. Part of the twin-arginine translocation (Tat) system that transports large folded proteins containing a characteristic twin-arginine motif in their signal peptide across membranes. Together with TatC, TatB is part of a receptor directly interacting with Tat signal peptides. TatB may form an oligomeric binding site that transiently accommodates folded Tat precursor proteins before their translocation. The protein is Sec-independent protein translocase protein TatB of Shewanella piezotolerans (strain WP3 / JCM 13877).